The sequence spans 208 residues: Uracil phosphoribosyltransferase (208 aa).

5-phospho-alpha-D-ribose 1-diphosphate-binding positions include R78, R103, and 130-138; that span reads DPMLATGGS. Uracil-binding positions include I193 and 198–200; that span reads GDA. Residue D199 participates in 5-phospho-alpha-D-ribose 1-diphosphate binding.

It belongs to the UPRTase family. Requires Mg(2+) as cofactor.

The catalysed reaction is UMP + diphosphate = 5-phospho-alpha-D-ribose 1-diphosphate + uracil. The protein operates within pyrimidine metabolism; UMP biosynthesis via salvage pathway; UMP from uracil: step 1/1. Its activity is regulated as follows. Allosterically activated by GTP. Its function is as follows. Catalyzes the conversion of uracil and 5-phospho-alpha-D-ribose 1-diphosphate (PRPP) to UMP and diphosphate. The chain is Uracil phosphoribosyltransferase from Roseiflexus castenholzii (strain DSM 13941 / HLO8).